A 369-amino-acid polypeptide reads, in one-letter code: Septin-5 (369 aa).

Phosphothreonine is present on Thr-13. Residues 41–314 (KGFDFTLMVA…ENYRAHCIQQ (274 aa)) enclose the Septin-type G domain. Positions 51 to 58 (GESGLGKS) are G1 motif. GTP is bound by residues 51-58 (GESGLGKS), Thr-85, and Gly-111. The segment at 108 to 111 (DTPG) is G3 motif. Residue Arg-168 is modified to Omega-N-methylarginine. Positions 189–192 (AKAD) are G4 motif. 190–198 (KADCLVPSE) contacts GTP. At Ser-225 the chain carries Phosphoserine. GTP is bound by residues Gly-248 and Arg-263. Ser-327 carries the post-translational modification Phosphoserine. A Phosphothreonine modification is found at Thr-336. A coiled-coil region spans residues 338 to 369 (DAETEKLIRMKDEELRRMQEMLQKMKQQMQDQ).

This sequence belongs to the TRAFAC class TrmE-Era-EngA-EngB-Septin-like GTPase superfamily. Septin GTPase family. In terms of assembly, septins polymerize into heterooligomeric protein complexes that form filaments, and can associate with cellular membranes, actin filaments and microtubules. GTPase activity is required for filament formation. Interacts with SEPTIN2 and SEPTIN5. Interaction with SEPTIN4 not detected. In platelets, associated with a complex containing STX4. Interacts with PRKN; this interaction leads to SEPTIN5 ubiquitination and degradation. Interacts with DYRK1A. Interacts with STX1A; in the cerebellar cortex. In terms of processing, phosphorylated by DYRK1A.

The protein localises to the cytoplasm. Its subcellular location is the cytoskeleton. In terms of biological role, filament-forming cytoskeletal GTPase. Involved in cytokinesis (Potential). May play a role in platelet secretion. This Mus musculus (Mouse) protein is Septin-5.